Reading from the N-terminus, the 709-residue chain is Rho guanine nucleotide exchange factor 16 (709 aa).

Alanine 2 bears the N-acetylalanine mark. 3 positions are modified to phosphoserine: serine 6, serine 41, and serine 107. The interval 22–70 (ELRLDAGGNPASGLPMVRGSPRVRDDAAFQPQVPAPPQPRPPGHEEPWP) is disordered. The interval 114 to 146 (SREAARRDPKLLPAPSFSLDDMDVDKDPGGMLR) is disordered. A phosphoserine mark is found at serine 174, serine 191, and serine 208. Positions 180–246 (LAEEPSQPHT…ESSSPEGTQK (67 aa)) are disordered. Residues 191–207 (SPAKNKKTLGRKRGHKG) show a composition bias toward basic residues. A Phosphothreonine modification is found at threonine 226. Phosphoserine is present on residues serine 227, serine 230, and serine 240. The required for RHOG activation and mediates interaction with EPHA2 stretch occupies residues 275–481 (LDQLSTEERK…MERMEQMYTL (207 aa)). Residues 284-468 (KRQEAMFEIL…SKLVRQCNEG (185 aa)) form the DH domain. In terms of domain architecture, PH spans 501–620 (WLLKRGELFL…WIVALTHSER (120 aa)). The SH3 domain maps to 629 to 689 (GDLPQVEITK…PEDFARFITS (61 aa)). The short motif at 707-709 (TDV) is the PDZ-binding motif element.

In terms of assembly, interacts with ELMO2, EPHA2, RAC1 and RHOG; mediates activation of RAC1 by EPHA2. Interacts with TAX1BP3 (via PDZ domain). May interact with CDC42; stimulated by HPV16 E6.

The protein localises to the cytoplasm. Functionally, guanyl-nucleotide exchange factor of the RHOG GTPase stimulating the exchange of RHOG-associated GDP for GTP. May play a role in chemotactic cell migration by mediating the activation of RAC1 by EPHA2. May also activate CDC42 and mediate activation of CDC42 by the viral protein HPV16 E6. The protein is Rho guanine nucleotide exchange factor 16 (ARHGEF16) of Homo sapiens (Human).